The following is a 369-amino-acid chain: MEKVIPVHLPHQSYAVVIASGGLGQMGDYLQHQAHLKPGQKVLVVSNPLIFKHYGEKVLVSLQRAGFATSTCLLPAGERYKTLKSVQQIYDCALEQRLERSSTILALGGGVIGDMAGFAAATWLRGINVVQVPTTLLAMVDAAIGGKTGVNHPQGKNLIGAFHQPRLVLIDPDTLKTLPGREFRAALAEVIKYGVIWDGNLFQKLEAAERLDQYRTLSPQLLADLLVHSCQAKVDVVTKDEKEAGLRAILNYGHTIGHGIESLTNYRKFNHGEAVGLGMVAVGQLAVDLGFWSQEECDRQFSLIQKAHLPTHIPADLDLNLLIDSLQTDKKVQAGQVRFIVPTAIGAVTITDQIPTPAIVHVLKQMQKG.

Residues 110–114 (GVIGD), 134–135 (TT), Lys147, Lys156, and 174–177 (TLKT) contribute to the NAD(+) site. Residues Glu189, His254, and His271 each contribute to the Zn(2+) site.

This sequence belongs to the sugar phosphate cyclases superfamily. Dehydroquinate synthase family. Requires Co(2+) as cofactor. Zn(2+) is required as a cofactor. The cofactor is NAD(+).

The protein resides in the cytoplasm. It catalyses the reaction 7-phospho-2-dehydro-3-deoxy-D-arabino-heptonate = 3-dehydroquinate + phosphate. It participates in metabolic intermediate biosynthesis; chorismate biosynthesis; chorismate from D-erythrose 4-phosphate and phosphoenolpyruvate: step 2/7. Catalyzes the conversion of 3-deoxy-D-arabino-heptulosonate 7-phosphate (DAHP) to dehydroquinate (DHQ). In Cyanothece sp. (strain PCC 7425 / ATCC 29141), this protein is 3-dehydroquinate synthase.